The chain runs to 136 residues: MPTIQQLIRSERQELKKKTKSPALKSCPQRRGVCTRVYTTTPKKPNSALRKVARVRLTSGFEVTAYIPGIGHNLQEHSVVMIRGGRVKDLPGVRYHIIRGTLDTAGVKDRKQGRSKYGAKRPKPGAASTASTGKKR.

Positions 1 to 28 (MPTIQQLIRSERQELKKKTKSPALKSCP) are disordered. Aspartate 89 carries the 3-methylthioaspartic acid modification. The disordered stretch occupies residues 101-136 (TLDTAGVKDRKQGRSKYGAKRPKPGAASTASTGKKR). The span at 113-123 (GRSKYGAKRPK) shows a compositional bias: basic residues.

It belongs to the universal ribosomal protein uS12 family. In terms of assembly, part of the 30S ribosomal subunit. Contacts proteins S8 and S17. May interact with IF1 in the 30S initiation complex.

Functionally, with S4 and S5 plays an important role in translational accuracy. In terms of biological role, interacts with and stabilizes bases of the 16S rRNA that are involved in tRNA selection in the A site and with the mRNA backbone. Located at the interface of the 30S and 50S subunits, it traverses the body of the 30S subunit contacting proteins on the other side and probably holding the rRNA structure together. The combined cluster of proteins S8, S12 and S17 appears to hold together the shoulder and platform of the 30S subunit. This chain is Small ribosomal subunit protein uS12, found in Cyanothece sp. (strain PCC 7425 / ATCC 29141).